The sequence spans 278 residues: 2-dehydro-3-deoxyphosphooctonate aldolase (278 aa).

This sequence belongs to the KdsA family.

It is found in the cytoplasm. It catalyses the reaction D-arabinose 5-phosphate + phosphoenolpyruvate + H2O = 3-deoxy-alpha-D-manno-2-octulosonate-8-phosphate + phosphate. Its pathway is carbohydrate biosynthesis; 3-deoxy-D-manno-octulosonate biosynthesis; 3-deoxy-D-manno-octulosonate from D-ribulose 5-phosphate: step 2/3. The protein operates within bacterial outer membrane biogenesis; lipopolysaccharide biosynthesis. The polypeptide is 2-dehydro-3-deoxyphosphooctonate aldolase (Bartonella quintana (strain Toulouse) (Rochalimaea quintana)).